Consider the following 281-residue polypeptide: Undecaprenyl-diphosphatase (281 aa).

8 helical membrane-spanning segments follow: residues 2–22 (FDLI…FLPV), 46–66 (AFSS…VIQL), 93–113 (VIVG…FMDA), 115–135 (LMNF…FIVI), 152–172 (ITFK…VPGT), 190–210 (FVAA…VTFL), 228–248 (IVML…IKFM), and 259–279 (VFGY…ILGI).

Belongs to the UppP family.

The protein resides in the cell membrane. It catalyses the reaction di-trans,octa-cis-undecaprenyl diphosphate + H2O = di-trans,octa-cis-undecaprenyl phosphate + phosphate + H(+). Functionally, catalyzes the dephosphorylation of undecaprenyl diphosphate (UPP). Confers resistance to bacitracin. This Leuconostoc mesenteroides subsp. mesenteroides (strain ATCC 8293 / DSM 20343 / BCRC 11652 / CCM 1803 / JCM 6124 / NCDO 523 / NBRC 100496 / NCIMB 8023 / NCTC 12954 / NRRL B-1118 / 37Y) protein is Undecaprenyl-diphosphatase.